The chain runs to 279 residues: Tryptophan synthase alpha chain (279 aa).

Residues Glu-50 and Asp-61 each act as proton acceptor in the active site.

The protein belongs to the TrpA family. As to quaternary structure, tetramer of two alpha and two beta chains.

The enzyme catalyses (1S,2R)-1-C-(indol-3-yl)glycerol 3-phosphate + L-serine = D-glyceraldehyde 3-phosphate + L-tryptophan + H2O. It functions in the pathway amino-acid biosynthesis; L-tryptophan biosynthesis; L-tryptophan from chorismate: step 5/5. Its function is as follows. The alpha subunit is responsible for the aldol cleavage of indoleglycerol phosphate to indole and glyceraldehyde 3-phosphate. The protein is Tryptophan synthase alpha chain of Rhizobium johnstonii (strain DSM 114642 / LMG 32736 / 3841) (Rhizobium leguminosarum bv. viciae).